The following is a 252-amino-acid chain: Protein BTG3 (252 aa).

Residues 138–162 form a disordered region; the sequence is VTSDYHSGSSSSDEETSKEMEVKPS.

It belongs to the BTG family. Ubiquitous. High expression in the ventricular zone of the developing central nervous system. High in ovary, testis, prostate, thymus and lung.

Its function is as follows. Overexpression impairs serum-induced cell cycle progression from the G0/G1 to S phase. The protein is Protein BTG3 (BTG3) of Homo sapiens (Human).